We begin with the raw amino-acid sequence, 390 residues long: S-adenosylmethionine synthase 1 (390 aa).

Position 9 (Glu-9) interacts with Mg(2+). An ATP-binding site is contributed by His-15. Residue Glu-43 coordinates K(+). Glu-56 and Gln-99 together coordinate L-methionine. ATP-binding positions include 167–169 (DGK), 235–238 (SGRF), Asp-246, 252–253 (RK), Ala-269, Lys-273, and Lys-277. Asp-246 serves as a coordination point for L-methionine. Lys-277 contributes to the L-methionine binding site.

This sequence belongs to the AdoMet synthase family. In terms of assembly, homotetramer. The cofactor is Mn(2+). It depends on Mg(2+) as a cofactor. Requires Co(2+) as cofactor. K(+) is required as a cofactor.

Its subcellular location is the cytoplasm. The catalysed reaction is L-methionine + ATP + H2O = S-adenosyl-L-methionine + phosphate + diphosphate. The protein operates within amino-acid biosynthesis; S-adenosyl-L-methionine biosynthesis; S-adenosyl-L-methionine from L-methionine: step 1/1. Catalyzes the formation of S-adenosylmethionine from methionine and ATP. The reaction comprises two steps that are both catalyzed by the same enzyme: formation of S-adenosylmethionine (AdoMet) and triphosphate, and subsequent hydrolysis of the triphosphate. The protein is S-adenosylmethionine synthase 1 (SAMS1) of Nicotiana tabacum (Common tobacco).